A 330-amino-acid chain; its full sequence is NADH-quinone oxidoreductase subunit H (330 aa).

8 consecutive transmembrane segments (helical) span residues 5–25 (LLTL…VLTL), 78–98 (WVFM…FAVI), 120–140 (IGLL…ALGG), 155–175 (AMAQ…PVVM), 191–211 (SLPN…AIMA), 243–263 (FFVG…VLFL), 271–291 (LPGI…FIWV), and 308–328 (WKIL…WLIW).

This sequence belongs to the complex I subunit 1 family. As to quaternary structure, NDH-1 is composed of 14 different subunits. Subunits NuoA, H, J, K, L, M, N constitute the membrane sector of the complex.

The protein resides in the cell inner membrane. The catalysed reaction is a quinone + NADH + 5 H(+)(in) = a quinol + NAD(+) + 4 H(+)(out). Functionally, NDH-1 shuttles electrons from NADH, via FMN and iron-sulfur (Fe-S) centers, to quinones in the respiratory chain. The immediate electron acceptor for the enzyme in this species is believed to be ubiquinone. Couples the redox reaction to proton translocation (for every two electrons transferred, four hydrogen ions are translocated across the cytoplasmic membrane), and thus conserves the redox energy in a proton gradient. This subunit may bind ubiquinone. This is NADH-quinone oxidoreductase subunit H from Syntrophotalea carbinolica (strain DSM 2380 / NBRC 103641 / GraBd1) (Pelobacter carbinolicus).